Consider the following 276-residue polypeptide: WIMGHMVNGIDQIDEFLRLGSNSPEFDINFDKDAKPVYTYHGVPCDCFRSCLRWEYIGDYLTALREVTTPGNPKFRENLSLFVFDLKTNSLYDSQAGKAGENLADDIFKYYWNEGNNGGRAYMIISIPDIEHYDLMTSFKHYFISNGHEELLDFVGFDFSANDNIPDVEKVFEKVRVPGVPDRVWQSDGITNCIMRGLNRVKEAVKVRDAGGIINKVYVWTVDKVPSIKAALDAGVDGVMTNHPDVVVGVLREDGYKDKFRYASYNDNPWETFKAE.

The active site involves His5. Residues Glu25 and Asp27 each coordinate Mg(2+). His41 serves as the catalytic Nucleophile. Cystine bridges form between Cys45–Cys51 and Cys47–Cys193. Residue Asp85 participates in Mg(2+) binding.

Belongs to the arthropod phospholipase D family. Class II subfamily. It depends on Mg(2+) as a cofactor. Expressed by the venom gland.

It is found in the secreted. It catalyses the reaction an N-(acyl)-sphingosylphosphocholine = an N-(acyl)-sphingosyl-1,3-cyclic phosphate + choline. It carries out the reaction an N-(acyl)-sphingosylphosphoethanolamine = an N-(acyl)-sphingosyl-1,3-cyclic phosphate + ethanolamine. The catalysed reaction is a 1-acyl-sn-glycero-3-phosphocholine = a 1-acyl-sn-glycero-2,3-cyclic phosphate + choline. The enzyme catalyses a 1-acyl-sn-glycero-3-phosphoethanolamine = a 1-acyl-sn-glycero-2,3-cyclic phosphate + ethanolamine. Its function is as follows. Dermonecrotic toxins cleave the phosphodiester linkage between the phosphate and headgroup of certain phospholipids (sphingolipid and lysolipid substrates), forming an alcohol (often choline) and a cyclic phosphate. This toxin acts on sphingomyelin (SM). It may also act on ceramide phosphoethanolamine (CPE), lysophosphatidylcholine (LPC) and lysophosphatidylethanolamine (LPE), but not on lysophosphatidylserine (LPS), and lysophosphatidylglycerol (LPG). It acts by transphosphatidylation, releasing exclusively cyclic phosphate products as second products. Induces dermonecrosis, hemolysis, increased vascular permeability, edema, inflammatory response, and platelet aggregation. The polypeptide is Dermonecrotic toxin LvSicTox-alphaII1 (Loxosceles variegata (Recluse spider)).